Consider the following 61-residue polypeptide: Metallothionein (61 aa).

Met1 carries the post-translational modification N-acetylmethionine. Positions 1–29 are beta; sequence MDPNCSCAAGGSCTCAGSCKCKECKCTSC. A divalent metal cation-binding residues include Cys5, Cys7, Cys13, Cys15, Cys19, Cys21, Cys24, Cys26, Cys29, Cys33, Cys34, Cys36, Cys37, Cys41, Cys44, Cys48, Cys50, Cys57, Cys59, and Cys60. An alpha region spans residues 30–61; that stretch reads KKSCCSCCPPGCTKCAQGCVCKGASDKCNCCA.

It belongs to the metallothionein superfamily. Type 1 family. In terms of assembly, monomer.

Metallothioneins have a high content of cysteine residues that bind various heavy metals. The polypeptide is Metallothionein (Balaena mysticetus (Bowhead whale)).